Reading from the N-terminus, the 292-residue chain is UTP--glucose-1-phosphate uridylyltransferase (292 aa).

This sequence belongs to the UDPGP type 2 family. In terms of assembly, interacts with FloT.

The protein resides in the cell membrane. It is found in the membrane raft. The catalysed reaction is alpha-D-glucose 1-phosphate + UTP + H(+) = UDP-alpha-D-glucose + diphosphate. Its pathway is glycolipid metabolism; diglucosyl-diacylglycerol biosynthesis. Its function is as follows. Catalyzes the formation of UDP-glucose from glucose-1-phosphate and UTP. This is an intermediate step in the biosynthesis of diglucosyl-diacylglycerol (Glc2-DAG), i.e. the predominant glycolipid found in B.subtilis membrane, which is also used as a membrane anchor for lipoteichoic acid (LTA). Has a role in the biosynthesis of all phosphate-containing envelope polymers, since UDP-glucose serves as a glucosyl donor not only for the biosynthesis of LTA but also for wall teichoic acids (WTAs). Is required for biofilm formation. This is likely due to another role of UDP-glucose, which might also act as a metabolic signal regulating biofilm formation or may be involved in some unknown biosynthetic pathway essential for biofilm formation, e.g. the synthesis of an exopolysaccharide. This is UTP--glucose-1-phosphate uridylyltransferase (gtaB) from Bacillus subtilis (strain 168).